The chain runs to 553 residues: Methyl-coenzyme M reductase subunit alpha (553 aa).

Gln151 lines the coenzyme F430 pocket. Residues Arg229, 260 to 261 (KH), and Arg274 each bind coenzyme B. Tyr336 and Tyr447 together coordinate coenzyme M.

It belongs to the methyl-coenzyme M reductase alpha subunit family. As to quaternary structure, MCR is a hexamer of two alpha, two beta, and two gamma chains, forming a dimer of heterotrimers. It depends on coenzyme F430 as a cofactor.

Its subcellular location is the cytoplasm. The catalysed reaction is coenzyme B + methyl-coenzyme M = methane + coenzyme M-coenzyme B heterodisulfide. It functions in the pathway one-carbon metabolism; methyl-coenzyme M reduction; methane from methyl-coenzyme M: step 1/1. In terms of biological role, component of the methyl-coenzyme M reductase (MCR) I that catalyzes the reductive cleavage of methyl-coenzyme M (CoM-S-CH3 or 2-(methylthio)ethanesulfonate) using coenzyme B (CoB or 7-mercaptoheptanoylthreonine phosphate) as reductant which results in the production of methane and the mixed heterodisulfide of CoB and CoM (CoM-S-S-CoB). This is the final step in methanogenesis. This chain is Methyl-coenzyme M reductase subunit alpha (mcrA), found in Methanococcus vannielii.